The sequence spans 153 residues: Small heat shock protein ibp (153 aa).

In terms of domain architecture, sHSP spans 35-153 (KIISDSVPPY…KIQKIQINVK (119 aa)).

The protein belongs to the small heat shock protein (HSP20) family.

The chain is Small heat shock protein ibp (ibp) from Buchnera aphidicola subsp. Thelaxes suberi.